A 190-amino-acid polypeptide reads, in one-letter code: Inosine triphosphate pyrophosphatase (190 aa).

9-14 provides a ligand contact to ITP; it reads TGNAKK. Glu-39 is a Mg(2+) binding site. ITP is bound by residues Lys-51, 67-68, Lys-84, 144-147, Lys-167, and 172-173; these read DT, FGWD, and HR.

This sequence belongs to the HAM1 NTPase family. As to quaternary structure, homodimer. The cofactor is Mg(2+). Mn(2+) serves as cofactor.

Its subcellular location is the cytoplasm. The enzyme catalyses ITP + H2O = IMP + diphosphate + H(+). The catalysed reaction is dITP + H2O = dIMP + diphosphate + H(+). It catalyses the reaction XTP + H2O = XMP + diphosphate + H(+). Its function is as follows. Pyrophosphatase that hydrolyzes non-canonical purine nucleotides such as inosine triphosphate (ITP), deoxyinosine triphosphate (dITP) or xanthosine 5'-triphosphate (XTP) to their respective monophosphate derivatives. The enzyme does not distinguish between the deoxy- and ribose forms. Probably excludes non-canonical purines from RNA and DNA precursor pools, thus preventing their incorporation into RNA and DNA and avoiding chromosomal lesions. This chain is Inosine triphosphate pyrophosphatase, found in Pediculus humanus subsp. corporis (Body louse).